Reading from the N-terminus, the 768-residue chain is Glucoamylase S2 (768 aa).

The N-terminal stretch at Met-1 to Gly-21 is a signal peptide. 2 disordered regions span residues Arg-29–Ile-83 and Thr-125–Pro-149. Residues Gly-30–Ser-48 show a composition bias toward low complexity. N-linked (GlcNAc...) asparagine glycosylation is present at Asn-35. Residues Ala-49–Tyr-66 are compositionally biased toward polar residues. 2 stretches are compositionally biased toward low complexity: residues Thr-71–Ile-83 and Ser-131–Pro-149. N-linked (GlcNAc...) asparagine glycans are attached at residues Asn-309, Asn-323, Asn-415, Asn-424, and Asn-435. Positions Val-349–Tyr-692 are h subunit. Position 456 (Trp-456) interacts with substrate. Asn-514 is a glycosylation site (N-linked (GlcNAc...) asparagine). Asp-519 serves as the catalytic Proton acceptor. Glu-522 acts as the Proton donor in catalysis. Asn-547, Asn-646, Asn-651, Asn-721, and Asn-742 each carry an N-linked (GlcNAc...) asparagine glycan. A y subunit region spans residues Arg-693–Asn-768.

The protein belongs to the glycosyl hydrolase 15 family.

The enzyme catalyses Hydrolysis of terminal (1-&gt;4)-linked alpha-D-glucose residues successively from non-reducing ends of the chains with release of beta-D-glucose.. The sequence is that of Glucoamylase S2 (STA2) from Saccharomyces cerevisiae (Baker's yeast).